We begin with the raw amino-acid sequence, 101 residues long: Small ribosomal subunit protein uS14 (101 aa).

It belongs to the universal ribosomal protein uS14 family. Part of the 30S ribosomal subunit. Contacts proteins S3 and S10.

Binds 16S rRNA, required for the assembly of 30S particles and may also be responsible for determining the conformation of the 16S rRNA at the A site. This chain is Small ribosomal subunit protein uS14, found in Shewanella oneidensis (strain ATCC 700550 / JCM 31522 / CIP 106686 / LMG 19005 / NCIMB 14063 / MR-1).